The following is a 308-amino-acid chain: uncharacterized protein (308 aa).

This is an uncharacterized protein from Escherichia coli (strain K12).